A 338-amino-acid chain; its full sequence is Decarboxylase macB (338 aa).

Residues His7, His9, His159, and Asp283 each contribute to the Zn(2+) site.

This sequence belongs to the metallo-dependent hydrolases superfamily. ACMSD family.

The enzyme catalyses 6-methylsalicylate + H(+) = 3-methylphenol + CO2. Its pathway is secondary metabolite biosynthesis; terpenoid biosynthesis. Decarboxylase; part of the gene cluster that mediates the biosynthesis of macrophorins, isoprenoid epoxycyclohexenones containing cyclized drimane moieties. The first step of the pathway is the synthesis of 6-methylsalicylic acid (6-MSA) by the polyketide synthase macA. 6-MSA is then converted to m-cresol by the decarboxylase macB. The cytochrome P450 monooxygenase macC then catalyzes the oxidation of m-cresol to toluquinol. Epoxidation of toluquinol is then performed by the short chain dehydrogenase macD, with the help of macE, and a further prenylation by macG leads to 7-deacetoxyyanuthone A. The next step is the hydroxylation of C-22 of 7-deacetoxyyanuthone A by the cytochrome P450 monooxygenase macH to yield 22-deacetylyanuthone A. O-Mevalon transferase macI then attaches mevalon to the hydroxyl group of 22-deacetylyanuthone A to produce yanuthone E. The terpene cyclase macJ catalyzes the cyclization of 22-deacetylyanuthone A to macrophorin A. MacJ is also able to catalyze cyclization of yanuthone E and 7-deacetoxyyanuthone A to their corresponding macrophorins. The macJ products can be further modified by macH and macJ, as well as by the FAD-dependent monooxygenase macF, to produce additional macrophorins, including 4'-oxomacrophorin A, 4'-oxomacrophorin D and 4'-oxomacrophorin E. This Penicillium terrestre protein is Decarboxylase macB.